Reading from the N-terminus, the 288-residue chain is 33 kDa chaperonin (288 aa).

2 disulfide bridges follow: C236–C238 and C269–C272.

Belongs to the HSP33 family. Post-translationally, under oxidizing conditions two disulfide bonds are formed involving the reactive cysteines. Under reducing conditions zinc is bound to the reactive cysteines and the protein is inactive.

The protein resides in the cytoplasm. Functionally, redox regulated molecular chaperone. Protects both thermally unfolding and oxidatively damaged proteins from irreversible aggregation. Plays an important role in the bacterial defense system toward oxidative stress. The polypeptide is 33 kDa chaperonin (Lactococcus lactis subsp. cremoris (strain MG1363)).